We begin with the raw amino-acid sequence, 180 residues long: Large ribosomal subunit protein uL5 (180 aa).

It belongs to the universal ribosomal protein uL5 family. As to quaternary structure, part of the 50S ribosomal subunit; part of the 5S rRNA/L5/L18/L25 subcomplex. Contacts the 5S rRNA and the P site tRNA. Forms a bridge to the 30S subunit in the 70S ribosome.

Functionally, this is one of the proteins that bind and probably mediate the attachment of the 5S RNA into the large ribosomal subunit, where it forms part of the central protuberance. In the 70S ribosome it contacts protein S13 of the 30S subunit (bridge B1b), connecting the 2 subunits; this bridge is implicated in subunit movement. Contacts the P site tRNA; the 5S rRNA and some of its associated proteins might help stabilize positioning of ribosome-bound tRNAs. This is Large ribosomal subunit protein uL5 from Clostridium tetani (strain Massachusetts / E88).